Reading from the N-terminus, the 777-residue chain is Disintegrin and metalloproteinase domain-containing protein 5 (777 aa).

Residues M1–A16 form the signal peptide. The propeptide occupies G17–Y142. The Extracellular portion of the chain corresponds to G17 to R706. N-linked (GlcNAc...) asparagine glycans are attached at residues N49 and N123. Residues R185–S382 form the Peptidase M12B domain. 4 disulfide bridges follow: C294–C377, C336–C361, C338–C343, and C456–C477. One can recognise a Disintegrin domain in the interval R396–N485. N566 carries an N-linked (GlcNAc...) asparagine glycan. Positions N633–A667 constitute an EGF-like domain. 3 cysteine pairs are disulfide-bonded: C637-C649, C643-C655, and C657-C666. A helical membrane pass occupies residues F707–K727. Topologically, residues Q728–Q777 are cytoplasmic. A compositionally biased stretch (polar residues) spans S744 to E760. Residues S744 to Q777 form a disordered region. Residues F763–Q777 show a composition bias toward basic and acidic residues.

As to quaternary structure, interacts with TEX101. Subject to proteolytic processing during epididymal transit of spermatozoa. In terms of tissue distribution, detected in testis.

Its subcellular location is the membrane. In terms of biological role, this is a non catalytic metalloprotease-like protein. May play a role in sperm-egg fusion. This chain is Disintegrin and metalloproteinase domain-containing protein 5 (ADAM5), found in Cavia porcellus (Guinea pig).